We begin with the raw amino-acid sequence, 71 residues long: Protein MTH_1184 (71 aa).

This chain is Protein MTH_1184, found in Methanothermobacter thermautotrophicus (strain ATCC 29096 / DSM 1053 / JCM 10044 / NBRC 100330 / Delta H) (Methanobacterium thermoautotrophicum).